Reading from the N-terminus, the 272-residue chain is Octanoyltransferase (272 aa).

The segment covering 1–12 has biased composition (polar residues); the sequence is MQQDPPTSQPHT. The segment at 1 to 20 is disordered; it reads MQQDPPTSQPHTPQIVDGVK. In terms of domain architecture, BPL/LPL catalytic spans 65 to 255; sequence HQRPNTVIYV…EMMSFQPYEM (191 aa). Substrate is bound by residues 103–110, 175–177, and 188–190; these read RGGEITWH, AIG, and GFA. Cys206 (acyl-thioester intermediate) is an active-site residue.

The protein belongs to the LipB family.

The protein resides in the cytoplasm. It carries out the reaction octanoyl-[ACP] + L-lysyl-[protein] = N(6)-octanoyl-L-lysyl-[protein] + holo-[ACP] + H(+). It participates in protein modification; protein lipoylation via endogenous pathway; protein N(6)-(lipoyl)lysine from octanoyl-[acyl-carrier-protein]: step 1/2. Functionally, catalyzes the transfer of endogenously produced octanoic acid from octanoyl-acyl-carrier-protein onto the lipoyl domains of lipoate-dependent enzymes. Lipoyl-ACP can also act as a substrate although octanoyl-ACP is likely to be the physiological substrate. The chain is Octanoyltransferase from Cutibacterium acnes (strain DSM 16379 / KPA171202) (Propionibacterium acnes).